Consider the following 87-residue polypeptide: uncharacterized protein (87 aa).

An N-terminal signal peptide occupies residues 1-23; the sequence is MAVSVLRLTVVLGLLVLFLTCYA. Residues 24–44 are disordered; sequence DDKPDKPDDKPDDSGKDPKPD.

Its subcellular location is the secreted. This is an uncharacterized protein from Homo sapiens (Human).